We begin with the raw amino-acid sequence, 296 residues long: Ribosomal RNA small subunit methyltransferase H (296 aa).

Residues G30–H32, D49, F76, D97, and Q104 contribute to the S-adenosyl-L-methionine site.

The protein belongs to the methyltransferase superfamily. RsmH family.

Its subcellular location is the cytoplasm. It catalyses the reaction cytidine(1402) in 16S rRNA + S-adenosyl-L-methionine = N(4)-methylcytidine(1402) in 16S rRNA + S-adenosyl-L-homocysteine + H(+). Functionally, specifically methylates the N4 position of cytidine in position 1402 (C1402) of 16S rRNA. The chain is Ribosomal RNA small subunit methyltransferase H from Mesomycoplasma hyopneumoniae (strain 232) (Mycoplasma hyopneumoniae).